Reading from the N-terminus, the 118-residue chain is FFQLAVFVVILFNINLLSASAGSKGSSAPQSSGDSVVAEFCDTNCTMKKDGKWTECNGDCFCVHVGNETVGRCMRLDGDYDYTSSKTTRRNKKTRNGLCRLDRNRTTVDYPERNTREP.

The first 19 residues, Phe-1–Ala-19, serve as a signal peptide directing secretion. Intrachain disulfides connect Cys-41/Cys-60, Cys-45/Cys-62, and Cys-56/Cys-73. A glycan (N-linked (GlcNAc...) asparagine) is linked at Asn-44. Residues Asn-67 and Asn-104 are each glycosylated (N-linked (GlcNAc...) asparagine).

The protein resides in the secreted. Functionally, salivary chemokine-binding protein which binds to host chemokines CXCL1, CXCL2, CXCL3, CXCL4, CXCL5, CXCL6, CXCL10, CXCL11 and CXCL13. This Ixodes ricinus (Common tick) protein is Evasin P1080.